The chain runs to 82 residues: Defensin-like protein 22 (82 aa).

An N-terminal signal peptide occupies residues 1-24 (MAGLKVFSFALLLILTFSLIDVEG). Disulfide bonds link Cys-34/Cys-82, Cys-44/Cys-69, Cys-53/Cys-78, and Cys-57/Cys-80.

The protein belongs to the DEFL family.

It localises to the secreted. This is Defensin-like protein 22 from Arabidopsis thaliana (Mouse-ear cress).